The following is a 182-amino-acid chain: ATP-dependent protease subunit HslV (182 aa).

Thr-10 is a catalytic residue. Residues Ala-166, Cys-169, and Ser-172 each coordinate Na(+).

Belongs to the peptidase T1B family. HslV subfamily. In terms of assembly, a double ring-shaped homohexamer of HslV is capped on each side by a ring-shaped HslU homohexamer. The assembly of the HslU/HslV complex is dependent on binding of ATP.

Its subcellular location is the cytoplasm. It catalyses the reaction ATP-dependent cleavage of peptide bonds with broad specificity.. Its activity is regulated as follows. Allosterically activated by HslU binding. Its function is as follows. Protease subunit of a proteasome-like degradation complex believed to be a general protein degrading machinery. This chain is ATP-dependent protease subunit HslV, found in Rickettsia peacockii (strain Rustic).